Reading from the N-terminus, the 554-residue chain is Glutamine--tRNA ligase (554 aa).

The short motif at 34-44 is the 'HIGH' region element; that stretch reads PEPNGYLHIGH. Residues 35-37 and 41-47 each bind ATP; these read EPN and HIGHAKS. Positions 67 and 212 each coordinate L-glutamine. ATP is bound by residues threonine 231, 261–262, and 269–271; these read RL and MSK. Residues 268 to 272 carry the 'KMSKS' region motif; it reads VMSKR. An interaction with tRNA region spans residues 317–324; sequence TKQDNTIE.

It belongs to the class-I aminoacyl-tRNA synthetase family. As to quaternary structure, monomer.

It is found in the cytoplasm. The enzyme catalyses tRNA(Gln) + L-glutamine + ATP = L-glutaminyl-tRNA(Gln) + AMP + diphosphate. This is Glutamine--tRNA ligase from Shigella boydii serotype 18 (strain CDC 3083-94 / BS512).